The chain runs to 465 residues: MDKSQGVLLSSNVGAGSRPWPELLGSAHWDGLLDPLDLTLRRLILLCGDLCQVTYDSFNSDSHSKYCGTCRFSRSTLLDRTQFPAAGDLSVAAYLYATSDATAFPGSMVYSMSREAWSKESNWIGYVAVSNDAAAAASGQRVIYVAWRGTIRSLEWVDVLKPDLVDHDDILPEGHPGRGRSRVMKGWYLIYSSTDERSPFSKYSARDQMLAAVRELVARYRNESLGVVCTGHSLGASLATLCAFDIVVNGVSKVGDGAHIPVTAVVFGSPQIGNPEFKKQFEEQPNLRALHVRNMPDLIPLYPSGLLGYANVGKTLQVDSKKSPYVKRDTSPGDYHNLQGILHTVAGWNGKDGEFKLQVKRSVALVNKSSGFLKDSNLVPESWWVERNKGMVLGQNGEWQLEGPAEENLPVPPVVTGKIIDDDVAAVATSSSAKEDKKTGKGSKLLSGLIDQLLCVPDTCKAGAA.

S233 functions as the Acyl-ester intermediate in the catalytic mechanism. Catalysis depends on charge relay system residues S233, D297, and H336.

It belongs to the AB hydrolase superfamily. Lipase family.

Its subcellular location is the cytoplasm. Its function is as follows. Acylhydrolase that catalyzes the hydrolysis of phospholipids at the sn-1 position. The sequence is that of Phospholipase A1-II 5 from Oryza sativa subsp. japonica (Rice).